Reading from the N-terminus, the 528-residue chain is Aspartic proteinase-like protein 1 (528 aa).

Residues 1–22 (MVSRSAFLLFCVLFLATEETLA) form the signal peptide. The 350-residue stretch at 100 to 449 (HYTWIDIGTP…DRENMKLGWS (350 aa)) folds into the Peptidase A1 domain. Aspartate 118 is a catalytic residue. N-linked (GlcNAc...) asparagine glycans are attached at residues asparagine 193 and asparagine 217. Aspartate 333 is a catalytic residue. Residues asparagine 358 and asparagine 391 are each glycosylated (N-linked (GlcNAc...) asparagine). The segment at 451 to 503 (SKCQEDKIEPPQASPGSTSSPNPLPTDEQQSRGGHAVSPAIAGKTPSKTPSSS) is disordered. Polar residues predominate over residues 464–482 (SPGSTSSPNPLPTDEQQSR). The span at 494–503 (KTPSKTPSSS) shows a compositional bias: low complexity. A lipid anchor (GPI-anchor amidated serine) is attached at serine 503. The propeptide at 504–528 (SSYSFSSIMRLFNSLLLLHWLASLM) is removed in mature form.

The protein belongs to the peptidase A1 family.

The protein resides in the cell membrane. This is Aspartic proteinase-like protein 1 from Arabidopsis thaliana (Mouse-ear cress).